Reading from the N-terminus, the 368-residue chain is 3-dehydroquinate synthase (368 aa).

NAD(+)-binding positions include 109-113, 133-134, Lys146, Lys155, and 173-176; these read GVIGD, TS, and TLQT. The Zn(2+) site is built by Glu188, His253, and His270.

This sequence belongs to the sugar phosphate cyclases superfamily. Dehydroquinate synthase family. The cofactor is Co(2+). It depends on Zn(2+) as a cofactor. NAD(+) serves as cofactor.

The protein localises to the cytoplasm. It catalyses the reaction 7-phospho-2-dehydro-3-deoxy-D-arabino-heptonate = 3-dehydroquinate + phosphate. It functions in the pathway metabolic intermediate biosynthesis; chorismate biosynthesis; chorismate from D-erythrose 4-phosphate and phosphoenolpyruvate: step 2/7. Catalyzes the conversion of 3-deoxy-D-arabino-heptulosonate 7-phosphate (DAHP) to dehydroquinate (DHQ). This chain is 3-dehydroquinate synthase, found in Synechococcus sp. (strain ATCC 27144 / PCC 6301 / SAUG 1402/1) (Anacystis nidulans).